We begin with the raw amino-acid sequence, 223 residues long: Serum amyloid P-component (223 aa).

An N-terminal signal peptide occupies residues 1 to 19; that stretch reads MDKMLFWVSVFTIFLDVFA. The region spanning 24-223 is the Pentraxin (PTX) domain; it reads DKKVFVFPRE…YVIIKPRVWD (200 aa). C55 and C114 are joined by a disulfide. Residues D77, N78, E155, Q156, D157, and Q167 each contribute to the Ca(2+) site. A glycan (N-linked (GlcNAc...) asparagine) is linked at N198.

It belongs to the pentraxin family. As to quaternary structure, homopentamer. Pentraxin (or pentaxin) have a discoid arrangement of 5 non-covalently bound subunits. It depends on Ca(2+) as a cofactor.

The protein resides in the secreted. The sequence is that of Serum amyloid P-component (PTX2) from Cavia porcellus (Guinea pig).